A 252-amino-acid chain; its full sequence is Secreted LysM effector LysM1 (252 aa).

One can recognise a LysM 1 domain in the interval 20–64 (FAIPGDPGDTCDTLSDRWGITIDIFKSLNPGVNCPNLVANMEYCV). Residues 71 to 98 (DTPSTTTTAKPTMTPTSTPTKTTTTSTA) form a disordered region. Low complexity predominate over residues 72–98 (TPSTTTTAKPTMTPTSTPTKTTTTSTA). LysM domains lie at 126 to 172 (KFHL…YVCV) and 204 to 250 (KFHL…YVCI).

The protein belongs to the secreted LysM effector family.

Its subcellular location is the secreted. It is found in the cell wall. Secreted effector that binds two substrates, chitin and N-linked oligosaccharides associated with human skin glycoproteins. Could provide the pathogen with three important functions including shielding host cell wall chitin from the human immune system, shielding the pathogen's glycoproteins from host degradation and immune surveillance, and helping facilitate pathogen adhesion to human skin. The polypeptide is Secreted LysM effector LysM1 (Trichophyton rubrum (strain ATCC MYA-4607 / CBS 118892) (Athlete's foot fungus)).